Here is a 277-residue protein sequence, read N- to C-terminus: Polyamine aminopropyltransferase (277 aa).

Positions 2 to 235 (ELWFTENQDE…SLWTFTMGSK (234 aa)) constitute a PABS domain. Position 31 (Gln-31) interacts with S-methyl-5'-thioadenosine. His-62 and Asp-86 together coordinate spermidine. S-methyl-5'-thioadenosine is bound by residues Glu-106 and 137 to 138 (DG). Asp-155 functions as the Proton acceptor in the catalytic mechanism. Position 155–158 (155–158 (DSTD)) interacts with spermidine. S-methyl-5'-thioadenosine is bound at residue Pro-162.

This sequence belongs to the spermidine/spermine synthase family. In terms of assembly, homodimer or homotetramer.

It localises to the cytoplasm. The enzyme catalyses S-adenosyl 3-(methylsulfanyl)propylamine + putrescine = S-methyl-5'-thioadenosine + spermidine + H(+). It participates in amine and polyamine biosynthesis; spermidine biosynthesis; spermidine from putrescine: step 1/1. Its function is as follows. Catalyzes the irreversible transfer of a propylamine group from the amino donor S-adenosylmethioninamine (decarboxy-AdoMet) to putrescine (1,4-diaminobutane) to yield spermidine. This Thermoanaerobacter pseudethanolicus (strain ATCC 33223 / 39E) (Clostridium thermohydrosulfuricum) protein is Polyamine aminopropyltransferase.